Consider the following 234-residue polypeptide: Synaptogyrin-1 (234 aa).

Residue M1 is modified to N-acetylmethionine. Residues 1 to 23 are Cytoplasmic-facing; it reads MEGGAYGAGKAGGAFDPYALVRQ. The region spanning 20-173 is the MARVEL domain; the sequence is LVRQPHTILR…QAVLAFQRYQ (154 aa). The chain crosses the membrane as a helical span at residues 24–44; that stretch reads PHTILRVVSWLFSIVVFGSIV. At 45–71 the chain is on the lumenal side; it reads NEGYLNSASEGEEFCIYNRNPNACSYG. The helical transmembrane segment at 72–92 threads the bilayer; the sequence is VAVGVLAFLTCLLYLALDVYF. The Cytoplasmic portion of the chain corresponds to 93-103; that stretch reads PQISSVKDRKK. The chain crosses the membrane as a helical span at residues 104–124; it reads AVLSDIGVSAFWAFLWFVGFC. Over 125–148 the chain is Lumenal; it reads YLANQWQVSKPKDNPLNEGTDAAR. A helical transmembrane segment spans residues 149–169; the sequence is AAIAFSFFSIFTWAGQAVLAF. At 170–234 the chain is on the cytoplasmic side; it reads QRYQIGADSA…EPQGYQSQGY (65 aa). The segment at 192 to 234 is disordered; the sequence is SSMPYAPYVEPSTGPDPAGMGGTYQQPANTFDTEPQGYQSQGY. The span at 214 to 234 shows a compositional bias: polar residues; sequence TYQQPANTFDTEPQGYQSQGY.

This sequence belongs to the synaptogyrin family.

Its subcellular location is the cytoplasmic vesicle. It localises to the secretory vesicle. The protein resides in the synaptic vesicle membrane. The protein localises to the melanosome. Its function is as follows. May play a role in regulated exocytosis. Modulates the localization of synaptophysin/SYP into synaptic-like microvesicles and may therefore play a role in synaptic-like microvesicle formation and/or maturation. Involved in the regulation of short-term and long-term synaptic plasticity. This is Synaptogyrin-1 from Pongo abelii (Sumatran orangutan).